The following is a 334-amino-acid chain: Probable type II restriction enzyme HindVP (334 aa).

It carries out the reaction Endonucleolytic cleavage of DNA to give specific double-stranded fragments with terminal 5'-phosphates.. Its function is as follows. A P subtype restriction enzyme that recognizes the double-stranded sequence 5'-GRCGYC-3'; the cleavage site is unknown. The sequence is that of Probable type II restriction enzyme HindVP (hindVRP) from Haemophilus influenzae (strain ATCC 51907 / DSM 11121 / KW20 / Rd).